The sequence spans 536 residues: Interferon alpha/beta receptor 2 (536 aa).

The signal sequence occupies residues 1–26; that stretch reads MLLSQNVSAIGPLNLYPMVHISLVFG. Residues 27–246 lie on the Extracellular side of the membrane; that stretch reads ISYVVPDLSD…RESESSEPAT (220 aa). 2 disulfide bridges follow: C39-C122 and C85-C93. N-linked (GlcNAc...) asparagine glycans are attached at residues N58, N87, N101, N147, and N191. C210 and C230 form a disulfide bridge. A helical transmembrane segment spans residues 247–267; that stretch reads IGGILILFLLAAVCISTVMIL. The Cytoplasmic portion of the chain corresponds to 268–536; it reads KRIGYICLRN…VRQVNLKNFN (269 aa). A Phosphotyrosine modification is found at Y340. Tandem repeats lie at residues 358-362, 363-367, and 368-372. A 3 X 5 AA tandem repeats of S-L-E-D-C region spans residues 358–372; it reads SLEDCSLEDCSLEDC. Positions 369-434 are disordered; sequence LEDCSDPSAE…SDSTEGSEGR (66 aa). A compositionally biased stretch (acidic residues) spans 420–429; sequence TSEEDSDSTE. Positions 432–456 are mediates interaction with STAT2 (and required for the recruitment of USP18); sequence EGRIVFNVNLNSVCVRALEDDKDSE. A Phosphoserine modification is found at S480. The tract at residues 487–522 is disordered; the sequence is EEGTQLPFTDPSMECLRPQDALSDKSDTSESDVDIG. A Phosphotyrosine modification is found at Y525.

Belongs to the type II cytokine receptor family. As to quaternary structure, heterodimer with IFNAR1; forming the receptor for type I interferon. Interacts with the transcriptional factors STAT1 and STAT2. Interacts with JAK1. Interacts with USP18; indirectly via STAT2, it negatively regulates the assembly of the ternary interferon-IFNAR1-IFNAR2 complex and therefore type I interferon signaling. Post-translationally, phosphorylated on tyrosine residues upon interferon binding. Phosphorylation at Tyr-340 or Tyr-525 are sufficient to mediate interferon dependent activation of STAT1, STAT2 and STAT3 leading to antiproliferative effects on many different cell types. Expressed in the endometrium. Expressed in all tissues examined except conceptus at day 15 of pregnancy.

It localises to the cell membrane. Together with IFNAR1, forms the heterodimeric receptor for type I interferons (including interferons alpha, beta, epsilon, omega and kappa). Type I interferon binding activates the JAK-STAT signaling cascade, resulting in transcriptional activation or repression of interferon-regulated genes that encode the effectors of the interferon response. Mechanistically, type I interferon-binding brings the IFNAR1 and IFNAR2 subunits into close proximity with one another, driving their associated Janus kinases (JAKs) (TYK2 bound to IFNAR1 and JAK1 bound to IFNAR2) to cross-phosphorylate one another. The activated kinases phosphorylate specific tyrosine residues on the intracellular domains of IFNAR1 and IFNAR2, forming docking sites for the STAT transcription factors (STAT1, STAT2 and STAT). STAT proteins are then phosphorylated by the JAKs, promoting their translocation into the nucleus to regulate expression of interferon-regulated genes. This is Interferon alpha/beta receptor 2 (IFNAR2) from Ovis aries (Sheep).